The following is a 245-amino-acid chain: tRNA (guanine-N(1)-)-methyltransferase (245 aa).

Residues G111 and 130 to 135 (IGDYVL) each bind S-adenosyl-L-methionine.

This sequence belongs to the RNA methyltransferase TrmD family. In terms of assembly, homodimer.

It is found in the cytoplasm. It carries out the reaction guanosine(37) in tRNA + S-adenosyl-L-methionine = N(1)-methylguanosine(37) in tRNA + S-adenosyl-L-homocysteine + H(+). Specifically methylates guanosine-37 in various tRNAs. The sequence is that of tRNA (guanine-N(1)-)-methyltransferase from Dictyoglomus turgidum (strain DSM 6724 / Z-1310).